The chain runs to 622 residues: Threonine--tRNA ligase (622 aa).

The editing domain stretch occupies residues Met1–Glu141. The catalytic stretch occupies residues Pro199–Pro498. Zn(2+) contacts are provided by Cys291, His343, and His467.

The protein belongs to the class-II aminoacyl-tRNA synthetase family. Homodimer. Zn(2+) is required as a cofactor.

The protein resides in the cytoplasm. The enzyme catalyses tRNA(Thr) + L-threonine + ATP = L-threonyl-tRNA(Thr) + AMP + diphosphate + H(+). Its function is as follows. Catalyzes the attachment of threonine to tRNA(Thr) in a two-step reaction: L-threonine is first activated by ATP to form Thr-AMP and then transferred to the acceptor end of tRNA(Thr). Also edits incorrectly charged L-seryl-tRNA(Thr). This is Threonine--tRNA ligase from Methanococcus maripaludis (strain C7 / ATCC BAA-1331).